The primary structure comprises 150 residues: UPF0178 protein Ssed_1350 (150 aa).

It belongs to the UPF0178 family.

This Shewanella sediminis (strain HAW-EB3) protein is UPF0178 protein Ssed_1350.